The sequence spans 260 residues: Cytochrome c oxidase subunit 2 (260 aa).

Topologically, residues 1-41 are mitochondrial intermembrane; sequence MIVLKWLFFTISPCDAAEPWQLGFQDAATPIMQGIIDLHHD. Residues 42 to 62 form a helical membrane-spanning segment; that stretch reads IFFFLILILVFVLWILVRALW. Topologically, residues 63-86 are mitochondrial matrix; it reads HFHYKKNAIPQRIVHGTTIEILWT. A helical membrane pass occupies residues 87-107; sequence IFPSIILMFIAIPSFALLYSM. Residues 108–260 are Mitochondrial intermembrane-facing; the sequence is DEVVVDPAIT…NQLIPQTGEA (153 aa). His-187, Cys-222, Glu-224, Cys-226, His-230, and Met-233 together coordinate Cu cation. Glu-224 serves as a coordination point for Mg(2+).

Belongs to the cytochrome c oxidase subunit 2 family. In terms of assembly, component of the cytochrome c oxidase (complex IV, CIV), a multisubunit enzyme composed of a catalytic core of 3 subunits and several supernumerary subunits. The complex exists as a monomer or a dimer and forms supercomplexes (SCs) in the inner mitochondrial membrane with ubiquinol-cytochrome c oxidoreductase (cytochrome b-c1 complex, complex III, CIII). The cofactor is Cu cation.

Its subcellular location is the mitochondrion inner membrane. It carries out the reaction 4 Fe(II)-[cytochrome c] + O2 + 8 H(+)(in) = 4 Fe(III)-[cytochrome c] + 2 H2O + 4 H(+)(out). In terms of biological role, component of the cytochrome c oxidase, the last enzyme in the mitochondrial electron transport chain which drives oxidative phosphorylation. The respiratory chain contains 3 multisubunit complexes succinate dehydrogenase (complex II, CII), ubiquinol-cytochrome c oxidoreductase (cytochrome b-c1 complex, complex III, CIII) and cytochrome c oxidase (complex IV, CIV), that cooperate to transfer electrons derived from NADH and succinate to molecular oxygen, creating an electrochemical gradient over the inner membrane that drives transmembrane transport and the ATP synthase. Cytochrome c oxidase is the component of the respiratory chain that catalyzes the reduction of oxygen to water. Electrons originating from reduced cytochrome c in the intermembrane space (IMS) are transferred via the dinuclear copper A center (CU(A)) of subunit 2 and heme A of subunit 1 to the active site in subunit 1, a binuclear center (BNC) formed by heme A3 and copper B (CU(B)). The BNC reduces molecular oxygen to 2 water molecules using 4 electrons from cytochrome c in the IMS and 4 protons from the mitochondrial matrix. This is Cytochrome c oxidase subunit 2 (COX2) from Arabidopsis thaliana (Mouse-ear cress).